We begin with the raw amino-acid sequence, 232 residues long: uncharacterized protein (232 aa).

Transmembrane regions (helical) follow at residues 17-37, 54-74, 84-104, 107-127, 138-158, 161-181, and 203-223; these read FLAK…VFAY, MSFM…SGAL, ALFL…FMIY, GSIV…SVYG, GSYL…NMFF, SGLN…LTAY, and MAVV…LYLL.

Belongs to the BI1 family.

It is found in the cell membrane. This is an uncharacterized protein from Borreliella burgdorferi (strain ATCC 35210 / DSM 4680 / CIP 102532 / B31) (Borrelia burgdorferi).